A 145-amino-acid polypeptide reads, in one-letter code: Small ribosomal subunit protein uS9 (145 aa).

It belongs to the universal ribosomal protein uS9 family.

The protein localises to the cytoplasm. This is Small ribosomal subunit protein uS9 (RPS16) from Fritillaria agrestis (Stinkbells).